A 759-amino-acid chain; its full sequence is Protein hunchback (759 aa).

2 disordered regions span residues 30-51 and 171-215; these read EPGH…PIPS and SSEK…EDMK. Over residues 39–51 the composition is skewed to polar residues; the sequence is SVASSPRQSPIPS. T179 is modified (phosphothreonine). A phosphoserine mark is found at S189, S208, S210, and S211. Over residues 199 to 215 the composition is skewed to basic and acidic residues; it reads EPEKEHDQMSNSSEDMK. 4 C2H2-type zinc fingers span residues 241–263, 270–292, 298–320, and 326–350; these read YKCK…TRTH, LQCP…IRKH, FQCD…RKSH, and YRCA…KYGH. Disordered regions lie at residues 366–419, 513–565, and 606–696; these read LVID…TSQL, QLQQ…PQQP, and MTSP…APAS. Composition is skewed to low complexity over residues 399 to 419 and 513 to 522; these read VAAV…TSQL and QLQQQNQQQS. Residues 523 to 532 show a composition bias toward acidic residues; it reads DNEEEEQDDE. S537 and S540 each carry phosphoserine. Over residues 655-696 the composition is skewed to low complexity; it reads ANTSASSTASSSGNSSNASSNGNSSSNSSSNGTSSAAAAPAS. 2 C2H2-type zinc fingers span residues 706-728 and 734-758; these read YECK…MGYH and FKCN…RNAH.

The protein belongs to the hunchback C2H2-type zinc-finger protein family.

It is found in the nucleus. In terms of biological role, gap class segmentation protein that controls development of head structures. This is Protein hunchback from Drosophila yakuba (Fruit fly).